Consider the following 293-residue polypeptide: 4-hydroxy-tetrahydrodipicolinate synthase (293 aa).

T45 is a binding site for pyruvate. Catalysis depends on Y133, which acts as the Proton donor/acceptor. K162 serves as the catalytic Schiff-base intermediate with substrate. I204 contacts pyruvate.

It belongs to the DapA family. In terms of assembly, homotetramer; dimer of dimers.

The protein resides in the cytoplasm. The enzyme catalyses L-aspartate 4-semialdehyde + pyruvate = (2S,4S)-4-hydroxy-2,3,4,5-tetrahydrodipicolinate + H2O + H(+). Its pathway is amino-acid biosynthesis; L-lysine biosynthesis via DAP pathway; (S)-tetrahydrodipicolinate from L-aspartate: step 3/4. Functionally, catalyzes the condensation of (S)-aspartate-beta-semialdehyde [(S)-ASA] and pyruvate to 4-hydroxy-tetrahydrodipicolinate (HTPA). The sequence is that of 4-hydroxy-tetrahydrodipicolinate synthase from Mesorhizobium japonicum (strain LMG 29417 / CECT 9101 / MAFF 303099) (Mesorhizobium loti (strain MAFF 303099)).